We begin with the raw amino-acid sequence, 117 residues long: Galanin peptides (117 aa).

A signal peptide spans M1–S19. A propeptide spanning residues E20–E30 is cleaved from the precursor. Position 61 is a threonine amide (T61).

The protein belongs to the galanin family.

It localises to the secreted. In terms of biological role, endocrine hormone of the central and peripheral nervous systems that binds and activates the G protein-coupled receptors GALR1, GALR2, and GALR3. This small neuropeptide may regulate diverse physiologic functions including contraction of smooth muscle of the gastrointestinal and genitourinary tract, growth hormone and insulin release and adrenal secretion. This chain is Galanin peptides (GAL), found in Coturnix japonica (Japanese quail).